The primary structure comprises 405 residues: Tryptophan synthase beta chain (405 aa).

K95 carries the N6-(pyridoxal phosphate)lysine modification.

Belongs to the TrpB family. As to quaternary structure, tetramer of two alpha and two beta chains. It depends on pyridoxal 5'-phosphate as a cofactor.

It carries out the reaction (1S,2R)-1-C-(indol-3-yl)glycerol 3-phosphate + L-serine = D-glyceraldehyde 3-phosphate + L-tryptophan + H2O. It participates in amino-acid biosynthesis; L-tryptophan biosynthesis; L-tryptophan from chorismate: step 5/5. Its function is as follows. The beta subunit is responsible for the synthesis of L-tryptophan from indole and L-serine. The protein is Tryptophan synthase beta chain of Pseudomonas putida (strain GB-1).